The primary structure comprises 346 residues: Lipooligosaccharide heptosyltransferase 2 (346 aa).

Belongs to the glycosyltransferase 9 family.

It carries out the reaction an L-alpha-D-Hep-(1-&gt;5)-[alpha-Kdo-(2-&gt;4)]-alpha-Kdo-(2-&gt;6)-lipid A + ADP-L-glycero-beta-D-manno-heptose = an L-alpha-D-Hep-(1-&gt;3)-L-alpha-D-Hep-(1-&gt;5)-[alpha-Kdo-(2-&gt;4)]-alpha-Kdo-(2-&gt;6)-lipid A + ADP + H(+). Its pathway is bacterial outer membrane biogenesis; LOS core biosynthesis. Glycosyltransferase involved in the biosynthesis of the core oligosaccharide region of lipooligosaccharide (LOS). Catalyzes the addition of a heptose unit to the heptosyl-Kdo2-lipid A module. This is Lipooligosaccharide heptosyltransferase 2 (waaF) from Haemophilus influenzae (strain ATCC 51907 / DSM 11121 / KW20 / Rd).